We begin with the raw amino-acid sequence, 1068 residues long: Carbamoyl phosphate synthase large chain (1068 aa).

The segment at 1-401 (MPRRTDLHRI…SLLKAVRSLE (401 aa)) is carboxyphosphate synthetic domain. Residues R129, R169, G175, G176, Q208, I210, E215, G241, V242, H243, Q284, and E298 each contribute to the ATP site. Residues 133 to 327 (KQLMDELGQP…IAKIAAKIAV (195 aa)) enclose the ATP-grasp 1 domain. The Mg(2+) site is built by Q284, E298, and N300. Q284, E298, and N300 together coordinate Mn(2+). Residues 402-546 (IGVDHLALRE…YSTYEMENES (145 aa)) form an oligomerization domain region. The carbamoyl phosphate synthetic domain stretch occupies residues 547–935 (KKSQRPSVLV…ALYKVFEAAN (389 aa)). An ATP-grasp 2 domain is found at 671 to 867 (ESLLAELGIP…MAEVATRIIL (197 aa)). Residues R707, R746, L748, E752, G777, V778, H779, S780, Q820, and E838 each contribute to the ATP site. Residues Q820, E838, and N840 each coordinate Mg(2+). Mn(2+) contacts are provided by Q820, E838, and N840. The 133-residue stretch at 936–1068 (LHVPEYGKIL…ESRVFSTESI (133 aa)) folds into the MGS-like domain. Residues 936–1068 (LHVPEYGKIL…ESRVFSTESI (133 aa)) form an allosteric domain region.

Belongs to the CarB family. Composed of two chains; the small (or glutamine) chain promotes the hydrolysis of glutamine to ammonia, which is used by the large (or ammonia) chain to synthesize carbamoyl phosphate. Tetramer of heterodimers (alpha,beta)4. The cofactor is Mg(2+). It depends on Mn(2+) as a cofactor.

It carries out the reaction hydrogencarbonate + L-glutamine + 2 ATP + H2O = carbamoyl phosphate + L-glutamate + 2 ADP + phosphate + 2 H(+). The catalysed reaction is hydrogencarbonate + NH4(+) + 2 ATP = carbamoyl phosphate + 2 ADP + phosphate + 2 H(+). Its pathway is amino-acid biosynthesis; L-arginine biosynthesis; carbamoyl phosphate from bicarbonate: step 1/1. It functions in the pathway pyrimidine metabolism; UMP biosynthesis via de novo pathway; (S)-dihydroorotate from bicarbonate: step 1/3. Its function is as follows. Large subunit of the glutamine-dependent carbamoyl phosphate synthetase (CPSase). CPSase catalyzes the formation of carbamoyl phosphate from the ammonia moiety of glutamine, carbonate, and phosphate donated by ATP, constituting the first step of 2 biosynthetic pathways, one leading to arginine and/or urea and the other to pyrimidine nucleotides. The large subunit (synthetase) binds the substrates ammonia (free or transferred from glutamine from the small subunit), hydrogencarbonate and ATP and carries out an ATP-coupled ligase reaction, activating hydrogencarbonate by forming carboxy phosphate which reacts with ammonia to form carbamoyl phosphate. This chain is Carbamoyl phosphate synthase large chain, found in Cutibacterium acnes (strain DSM 16379 / KPA171202) (Propionibacterium acnes).